Here is a 115-residue protein sequence, read N- to C-terminus: Nucleoid-associated protein Ccel_0243 (115 aa).

Belongs to the YbaB/EbfC family. Homodimer.

The protein localises to the cytoplasm. It is found in the nucleoid. Functionally, binds to DNA and alters its conformation. May be involved in regulation of gene expression, nucleoid organization and DNA protection. In Ruminiclostridium cellulolyticum (strain ATCC 35319 / DSM 5812 / JCM 6584 / H10) (Clostridium cellulolyticum), this protein is Nucleoid-associated protein Ccel_0243.